Reading from the N-terminus, the 119-residue chain is Fluoride-specific ion channel FluC 2 (119 aa).

The helical transmembrane segment at 46–66 (FALGLLTFAGVTGDAALLVGV) threads the bilayer. 2 residues coordinate Na(+): G70 and T73. The helical transmembrane segment at 96-116 (LNAVGNLACALVGIGLAWGIV) threads the bilayer.

It belongs to the fluoride channel Fluc/FEX (TC 1.A.43) family.

The protein localises to the cell membrane. The enzyme catalyses fluoride(in) = fluoride(out). Na(+) is not transported, but it plays an essential structural role and its presence is essential for fluoride channel function. Functionally, fluoride-specific ion channel. Important for reducing fluoride concentration in the cell, thus reducing its toxicity. In Haloarcula marismortui (strain ATCC 43049 / DSM 3752 / JCM 8966 / VKM B-1809) (Halobacterium marismortui), this protein is Fluoride-specific ion channel FluC 2.